The following is a 337-amino-acid chain: MDAFKTHLATVASGAALSREQARAAFDDLLSGEVTPIQAGAFLTALSVRGESEDEIVGAVSAMRARMLPVTAPTGAIDIVGTGGDHSGSYNVSTLAAILTAACGVSVAKHGNRAATSRSGAADVLVALGVKIGLPPEALARCLSEAGLCFMFAQTHHGAMRHVAPVRTELPFRTIFNMLGPLSNPAGVTAQVFGVSRPAWAEPLTRVLATLGSRRVWTVHGSDGLDEITTTGPTAVIALEDGALSHFTIDPREVGLPLATLDDLRGGDPDHNAAALSAVLEGARSAYRDIAVLNAGAGLVVAGAAGTLAEGVARAQGAIDSGAARATLARLVAVSNA.

Residues Gly-81, 84–85 (GD), Ser-89, 91–94 (NVST), 109–117 (KHGNRAATS), and Ala-121 contribute to the 5-phospho-alpha-D-ribose 1-diphosphate site. An anthranilate-binding site is contributed by Gly-81. Residue Ser-93 participates in Mg(2+) binding. Asn-112 contacts anthranilate. Arg-167 contacts anthranilate. Mg(2+)-binding residues include Asp-226 and Glu-227.

This sequence belongs to the anthranilate phosphoribosyltransferase family. As to quaternary structure, homodimer. Requires Mg(2+) as cofactor.

It catalyses the reaction N-(5-phospho-beta-D-ribosyl)anthranilate + diphosphate = 5-phospho-alpha-D-ribose 1-diphosphate + anthranilate. It participates in amino-acid biosynthesis; L-tryptophan biosynthesis; L-tryptophan from chorismate: step 2/5. Functionally, catalyzes the transfer of the phosphoribosyl group of 5-phosphorylribose-1-pyrophosphate (PRPP) to anthranilate to yield N-(5'-phosphoribosyl)-anthranilate (PRA). In Methylorubrum populi (strain ATCC BAA-705 / NCIMB 13946 / BJ001) (Methylobacterium populi), this protein is Anthranilate phosphoribosyltransferase.